The primary structure comprises 445 residues: Serine protease inhibitor A3F (445 aa).

Asparagine 28, asparagine 94, asparagine 174, and asparagine 259 each carry an N-linked (GlcNAc...) asparagine glycan. Residues 357-382 are RCL; it reads GTEAAAGTGYQNLQCCQGVIYSMKIY.

This sequence belongs to the serpin family.

The protein is Serine protease inhibitor A3F (Serpina3f) of Mus musculus (Mouse).